The primary structure comprises 227 residues: Cytochrome c oxidase subunit 2 (227 aa).

The Mitochondrial intermembrane segment spans residues 1-14; that stretch reads MALPFQLGFQDATS. Residues 15 to 45 form a helical membrane-spanning segment; it reads PIMEELLHFHDHTLMIVFMISSLVLYLISSM. At 46–59 the chain is on the mitochondrial matrix side; the sequence is LTTRLTHTSTMDAQ. A helical membrane pass occupies residues 60-87; it reads EVETIWTILPAIILITIALPSLRILYMM. Topologically, residues 88-227 are mitochondrial intermembrane; the sequence is DEINNPSMTI…CFEKWSTSML (140 aa). Cu cation-binding residues include His161, Cys196, Glu198, Cys200, His204, and Met207. Glu198 contacts Mg(2+).

The protein belongs to the cytochrome c oxidase subunit 2 family. As to quaternary structure, component of the cytochrome c oxidase (complex IV, CIV), a multisubunit enzyme composed of 14 subunits. The complex is composed of a catalytic core of 3 subunits MT-CO1, MT-CO2 and MT-CO3, encoded in the mitochondrial DNA, and 11 supernumerary subunits COX4I, COX5A, COX5B, COX6A, COX6B, COX6C, COX7A, COX7B, COX7C, COX8 and NDUFA4, which are encoded in the nuclear genome. The complex exists as a monomer or a dimer and forms supercomplexes (SCs) in the inner mitochondrial membrane with NADH-ubiquinone oxidoreductase (complex I, CI) and ubiquinol-cytochrome c oxidoreductase (cytochrome b-c1 complex, complex III, CIII), resulting in different assemblies (supercomplex SCI(1)III(2)IV(1) and megacomplex MCI(2)III(2)IV(2)). Found in a complex with TMEM177, COA6, COX18, COX20, SCO1 and SCO2. Interacts with TMEM177 in a COX20-dependent manner. Interacts with COX20. Interacts with COX16. The cofactor is Cu cation.

The protein resides in the mitochondrion inner membrane. The enzyme catalyses 4 Fe(II)-[cytochrome c] + O2 + 8 H(+)(in) = 4 Fe(III)-[cytochrome c] + 2 H2O + 4 H(+)(out). In terms of biological role, component of the cytochrome c oxidase, the last enzyme in the mitochondrial electron transport chain which drives oxidative phosphorylation. The respiratory chain contains 3 multisubunit complexes succinate dehydrogenase (complex II, CII), ubiquinol-cytochrome c oxidoreductase (cytochrome b-c1 complex, complex III, CIII) and cytochrome c oxidase (complex IV, CIV), that cooperate to transfer electrons derived from NADH and succinate to molecular oxygen, creating an electrochemical gradient over the inner membrane that drives transmembrane transport and the ATP synthase. Cytochrome c oxidase is the component of the respiratory chain that catalyzes the reduction of oxygen to water. Electrons originating from reduced cytochrome c in the intermembrane space (IMS) are transferred via the dinuclear copper A center (CU(A)) of subunit 2 and heme A of subunit 1 to the active site in subunit 1, a binuclear center (BNC) formed by heme A3 and copper B (CU(B)). The BNC reduces molecular oxygen to 2 water molecules using 4 electrons from cytochrome c in the IMS and 4 protons from the mitochondrial matrix. This is Cytochrome c oxidase subunit 2 (MT-CO2) from Phyllostomus hastatus (Greater spear-nosed bat).